The sequence spans 218 residues: MEVEEAAYRTVWSEPPKRPAGRTKFRETRHPVYRGVRRRGGRPGAAGRWVCEVRVPGARGSRLWLGTFATAEAAARAHDAAALALRGRAACLNFADSAWRMPPVPASAALAGARGVRDAVAVAVEAFQRQSAAPSSPAETFANDGDEEEDNKDVLPVAAAEVFDAGAFELDDGFRFGGMDAGSYYASLAQGLLVEPPAAGAWWEDGELAGSDMPLWSY.

The disordered stretch occupies residues 1-26; that stretch reads MEVEEAAYRTVWSEPPKRPAGRTKFR. The AP2/ERF DNA-binding region spans 32–95; it reads VYRGVRRRGG…RGRAACLNFA (64 aa). A disordered region spans residues 131–151; sequence SAAPSSPAETFANDGDEEEDN.

Belongs to the AP2/ERF transcription factor family. ERF subfamily.

The protein resides in the nucleus. Transcriptional activator that binds specifically to the DNA sequence 5'-[AG]CCGAC-3'. Binding to the C-repeat/DRE element mediates high salinity- and dehydration-inducible transcription. Confers resistance to high salt, cold and drought stress. The sequence is that of Dehydration-responsive element-binding protein 1B (DREB1B) from Oryza sativa subsp. japonica (Rice).